The sequence spans 89 residues: Small ribosomal subunit protein bS16 (89 aa).

This sequence belongs to the bacterial ribosomal protein bS16 family.

This is Small ribosomal subunit protein bS16 from Nitrosomonas europaea (strain ATCC 19718 / CIP 103999 / KCTC 2705 / NBRC 14298).